The sequence spans 108 residues: Class I hydrophobin hgfII (108 aa).

A signal peptide spans 1 to 19 (MFSRIAAVSFLALPLLAAA). Intrachain disulfides connect C28–C89, C35–C83, C36–C69, and C90–C103. N92 is a glycosylation site (N-linked (GlcNAc...) asparagine).

The protein belongs to the fungal hydrophobin family. As to quaternary structure, self-assembles to form functional amyloid fibrils called rodlets with a diameter of 15-30 nm. Self-assembly into fibrillar rodlets occurs spontaneously at hydrophobic:hydrophilic interfaces and the rodlets further associate laterally to form amphipathic monolayers. As to expression, highky expressed in hyphae cultured in liquid medium.

The protein localises to the secreted. It is found in the cell wall. Functionally, aerial growth, conidiation, and dispersal of filamentous fungi in the environment rely upon a capability of their secreting small amphipathic proteins called hydrophobins (HPBs) with low sequence identity. Class I can self-assemble into an outermost layer of rodlet bundles on aerial cell surfaces, conferring cellular hydrophobicity that supports fungal growth, development and dispersal; whereas Class II form highly ordered films at water-air interfaces through intermolecular interactions but contribute nothing to the rodlet structure. HgfII is a class I hydrophobin that is involved in cell surface hydrophobicity and might play a key role during the growth and development of hyphae cultured in liquid medium. In Grifola frondosa (Maitake), this protein is Class I hydrophobin hgfII.